A 395-amino-acid chain; its full sequence is Putative pyridoxal phosphate-dependent acyltransferase (395 aa).

110–111 (GF) contributes to the pyridoxal 5'-phosphate binding site. A substrate-binding site is contributed by histidine 135. Pyridoxal 5'-phosphate contacts are provided by residues serine 185, 210 to 213 (DDAH), and 240 to 243 (TLSK). Residue lysine 243 is modified to N6-(pyridoxal phosphate)lysine. Position 357 (threonine 357) interacts with substrate.

It belongs to the class-II pyridoxal-phosphate-dependent aminotransferase family. In terms of assembly, homodimer. It depends on pyridoxal 5'-phosphate as a cofactor.

The sequence is that of Putative pyridoxal phosphate-dependent acyltransferase from Staphylococcus aureus (strain COL).